The chain runs to 190 residues: Protein GrpE (190 aa).

The span at 1–18 shows a compositional bias: polar residues; the sequence is MTETPNTSSEEIQTSEPS. Residues 1–21 are disordered; it reads MTETPNTSSEEIQTSEPSPDN.

The protein belongs to the GrpE family. As to quaternary structure, homodimer.

The protein localises to the cytoplasm. Participates actively in the response to hyperosmotic and heat shock by preventing the aggregation of stress-denatured proteins, in association with DnaK and GrpE. It is the nucleotide exchange factor for DnaK and may function as a thermosensor. Unfolded proteins bind initially to DnaJ; upon interaction with the DnaJ-bound protein, DnaK hydrolyzes its bound ATP, resulting in the formation of a stable complex. GrpE releases ADP from DnaK; ATP binding to DnaK triggers the release of the substrate protein, thus completing the reaction cycle. Several rounds of ATP-dependent interactions between DnaJ, DnaK and GrpE are required for fully efficient folding. This Chlamydia trachomatis serovar L2b (strain UCH-1/proctitis) protein is Protein GrpE.